The primary structure comprises 316 residues: Aspartate carbamoyltransferase catalytic subunit (316 aa).

2 residues coordinate carbamoyl phosphate: Arg-56 and Thr-57. Lys-84 is a binding site for L-aspartate. Carbamoyl phosphate-binding residues include Arg-106, His-139, and Gln-142. 2 residues coordinate L-aspartate: Arg-172 and Arg-226. The carbamoyl phosphate site is built by Gly-267 and Pro-268.

This sequence belongs to the aspartate/ornithine carbamoyltransferase superfamily. ATCase family. As to quaternary structure, heterododecamer (2C3:3R2) of six catalytic PyrB chains organized as two trimers (C3), and six regulatory PyrI chains organized as three dimers (R2).

It catalyses the reaction carbamoyl phosphate + L-aspartate = N-carbamoyl-L-aspartate + phosphate + H(+). The protein operates within pyrimidine metabolism; UMP biosynthesis via de novo pathway; (S)-dihydroorotate from bicarbonate: step 2/3. In terms of biological role, catalyzes the condensation of carbamoyl phosphate and aspartate to form carbamoyl aspartate and inorganic phosphate, the committed step in the de novo pyrimidine nucleotide biosynthesis pathway. In Mycobacterium sp. (strain MCS), this protein is Aspartate carbamoyltransferase catalytic subunit.